Consider the following 253-residue polypeptide: ER membrane protein complex subunit 3 (253 aa).

3 consecutive transmembrane segments (helical) span residues 10–30 (WVLL…QYIM), 126–146 (FIPQ…FILM), and 176–196 (SISW…LIGL).

It belongs to the EMC3 family. In terms of assembly, component of the ER membrane protein complex (EMC), which is composed of EMC1, EMC2, EMC3, EMC4, EMC5 and EMC6.

It is found in the endoplasmic reticulum membrane. In terms of biological role, the EMC seems to be required for efficient folding of proteins in the endoplasmic reticulum (ER). The chain is ER membrane protein complex subunit 3 (AIM27) from Saccharomyces cerevisiae (strain RM11-1a) (Baker's yeast).